Reading from the N-terminus, the 114-residue chain is T cell receptor beta variable 9 (114 aa).

A signal peptide spans 1–21 (MGFRLLCCVAFCLLGAGPVDS). An Ig-like domain is found at 22 to 114 (GVTQTPKHLI…SALYFCASSV (93 aa)). A disulfide bond links Cys-42 and Cys-110. Asn-96 carries N-linked (GlcNAc...) asparagine glycosylation.

In terms of assembly, alpha-beta TR is a heterodimer composed of an alpha and beta chain; disulfide-linked. The alpha-beta TR is associated with the transmembrane signaling CD3 coreceptor proteins to form the TR-CD3 (TcR or TCR). The assembly of alpha-beta TR heterodimers with CD3 occurs in the endoplasmic reticulum where a single alpha-beta TR heterodimer associates with one CD3D-CD3E heterodimer, one CD3G-CD3E heterodimer and one CD247 homodimer forming a stable octameric structure. CD3D-CD3E and CD3G-CD3E heterodimers preferentially associate with TR alpha and TR beta chains, respectively. The association of the CD247 homodimer is the last step of TcR assembly in the endoplasmic reticulum and is required for transport to the cell surface.

Its subcellular location is the cell membrane. Functionally, v region of the variable domain of T cell receptor (TR) beta chain that participates in the antigen recognition. Alpha-beta T cell receptors are antigen specific receptors which are essential to the immune response and are present on the cell surface of T lymphocytes. Recognize peptide-major histocompatibility (MH) (pMH) complexes that are displayed by antigen presenting cells (APC), a prerequisite for efficient T cell adaptive immunity against pathogens. Binding of alpha-beta TR to pMH complex initiates TR-CD3 clustering on the cell surface and intracellular activation of LCK that phosphorylates the ITAM motifs of CD3G, CD3D, CD3E and CD247 enabling the recruitment of ZAP70. In turn ZAP70 phosphorylates LAT, which recruits numerous signaling molecules to form the LAT signalosome. The LAT signalosome propagates signal branching to three major signaling pathways, the calcium, the mitogen-activated protein kinase (MAPK) kinase and the nuclear factor NF-kappa-B (NF-kB) pathways, leading to the mobilization of transcription factors that are critical for gene expression and essential for T cell growth and differentiation. The T cell repertoire is generated in the thymus, by V-(D)-J rearrangement. This repertoire is then shaped by intrathymic selection events to generate a peripheral T cell pool of self-MH restricted, non-autoaggressive T cells. Post-thymic interaction of alpha-beta TR with the pMH complexes shapes TR structural and functional avidity. This chain is T cell receptor beta variable 9, found in Homo sapiens (Human).